A 197-amino-acid chain; its full sequence is LexA repressor (197 aa).

Residues 28–47 (VREIARRFRITPRGAQLHLV) constitute a DNA-binding region (H-T-H motif). Active-site for autocatalytic cleavage activity residues include serine 119 and lysine 156.

The protein belongs to the peptidase S24 family. As to quaternary structure, homodimer.

The enzyme catalyses Hydrolysis of Ala-|-Gly bond in repressor LexA.. Its function is as follows. Represses a number of genes involved in the response to DNA damage (SOS response), including recA and lexA. In the presence of single-stranded DNA, RecA interacts with LexA causing an autocatalytic cleavage which disrupts the DNA-binding part of LexA, leading to derepression of the SOS regulon and eventually DNA repair. The chain is LexA repressor from Thermotoga neapolitana.